The primary structure comprises 212 residues: Putative tyrosine-protein phosphatase OCA1 (212 aa).

Positions 1–27 are disordered; that stretch reads MSNKDTSILKGNVDHEEADSNPKLRKI. Residues 12–22 are compositionally biased toward basic and acidic residues; that stretch reads NVDHEEADSNP. The Tyrosine-protein phosphatase domain maps to 40-208; the sequence is NFCPVERQLY…SVEIDPSKVP (169 aa). The active-site Phosphocysteine intermediate is the Cys146.

The protein belongs to the protein-tyrosine phosphatase family.

Its subcellular location is the cytoplasm. The catalysed reaction is O-phospho-L-tyrosyl-[protein] + H2O = L-tyrosyl-[protein] + phosphate. Functionally, putative tyrosine-protein phosphatase required for protection against superoxide stress. The sequence is that of Putative tyrosine-protein phosphatase OCA1 (OCA1) from Scheffersomyces stipitis (strain ATCC 58785 / CBS 6054 / NBRC 10063 / NRRL Y-11545) (Yeast).